Consider the following 182-residue polypeptide: Testis development-related protein (182 aa).

Disordered stretches follow at residues methionine 1–arginine 71 and threonine 117–serine 152. Serine 7 is modified (phosphoserine). Residues arginine 22–serine 37 show a composition bias toward low complexity. Basic and acidic residues predominate over residues asparagine 49 to glutamate 58. Positions threonine 59–threonine 68 are enriched in polar residues.

The protein belongs to the TDRP family. As to quaternary structure, interacts with PRM2. In terms of tissue distribution, predominantly expressed in testis.

It localises to the nucleus. Its subcellular location is the cytoplasm. Its function is as follows. Contributes to normal sperm motility, but not essential for male fertility. The sequence is that of Testis development-related protein (Tdrp) from Rattus norvegicus (Rat).